Consider the following 71-residue polypeptide: Small ribosomal subunit protein bS21 (71 aa).

The protein belongs to the bacterial ribosomal protein bS21 family.

This is Small ribosomal subunit protein bS21 from Shewanella woodyi (strain ATCC 51908 / MS32).